The primary structure comprises 223 residues: Protein DEHYDRATION-INDUCED 19 homolog 3 (223 aa).

T114 bears the Phosphothreonine mark. The residue at position 116 (S116) is a Phosphoserine.

This sequence belongs to the Di19 family. In terms of processing, phosphorylated in vitro by CPK3 or CPK11. As to expression, expressed in seedlings, roots, leaves, stems, flowers and siliques.

It localises to the nucleus. The polypeptide is Protein DEHYDRATION-INDUCED 19 homolog 3 (DI19-3) (Arabidopsis thaliana (Mouse-ear cress)).